The primary structure comprises 245 residues: Ribonuclease PH (245 aa).

Residues Arg-86 and 124–126 (GTR) contribute to the phosphate site.

The protein belongs to the RNase PH family. Homohexameric ring arranged as a trimer of dimers.

The catalysed reaction is tRNA(n+1) + phosphate = tRNA(n) + a ribonucleoside 5'-diphosphate. Functionally, phosphorolytic 3'-5' exoribonuclease that plays an important role in tRNA 3'-end maturation. Removes nucleotide residues following the 3'-CCA terminus of tRNAs; can also add nucleotides to the ends of RNA molecules by using nucleoside diphosphates as substrates, but this may not be physiologically important. Probably plays a role in initiation of 16S rRNA degradation (leading to ribosome degradation) during starvation. The sequence is that of Ribonuclease PH from Bacillus cereus (strain G9842).